Here is a 239-residue protein sequence, read N- to C-terminus: Probable transcriptional regulatory protein Veis_4238 (239 aa).

The disordered stretch occupies residues 1–22 (MAGHSKWANIQHRKGRQDEKRG).

This sequence belongs to the TACO1 family.

The protein resides in the cytoplasm. The sequence is that of Probable transcriptional regulatory protein Veis_4238 from Verminephrobacter eiseniae (strain EF01-2).